A 617-amino-acid polypeptide reads, in one-letter code: Transmembrane protein 232 (617 aa).

A helical membrane pass occupies residues Leu129–Leu149. The stretch at Leu567–Gln604 forms a coiled coil. Positions Glu598 to Glu617 are disordered.

It localises to the membrane. Plays a critical role for male fertility and sperm motility by regulating sperm cytoplasm removal and maintaining axoneme integrity. This chain is Transmembrane protein 232 (Tmem232), found in Rattus norvegicus (Rat).